Consider the following 323-residue polypeptide: MIEFGNFYQLIAKNHLSHWLETLPAQIAAWQREQQHGLFKQWSNAVEFLPEITPWRLDLLHSVTAESETPLSEGQLKRIDTLLRNLMPWRKGPFSLYGVDIDTEWRSDWKWDRVLPHLSDLTGRTILDVGCGSGYHLWRMIGAGAHLAVGIDPTQLFLCQFEAVRKLLGNDQRAHLLPLGIEQLPALKAFDTVFSMGVLYHRRSPLEHLWQLKDQLVNEGELVLETLVVDGDENTVLVPGDRYAQMRNVYFIPSAPALKKWLEKCGFVDVRIADVCVTTTEEQCRTEWMVTESLADFLDPNDRSKTVEGYPAPQRAVLIARKR.

Residues K91, W105, K110, G130, 152 to 154, 181 to 182, M196, Y200, and R315 contribute to the carboxy-S-adenosyl-L-methionine site; these read DPT and IE.

This sequence belongs to the class I-like SAM-binding methyltransferase superfamily. CmoB family. In terms of assembly, homotetramer.

It catalyses the reaction carboxy-S-adenosyl-L-methionine + 5-hydroxyuridine(34) in tRNA = 5-carboxymethoxyuridine(34) in tRNA + S-adenosyl-L-homocysteine + H(+). Its function is as follows. Catalyzes carboxymethyl transfer from carboxy-S-adenosyl-L-methionine (Cx-SAM) to 5-hydroxyuridine (ho5U) to form 5-carboxymethoxyuridine (cmo5U) at position 34 in tRNAs. The sequence is that of tRNA U34 carboxymethyltransferase from Salmonella paratyphi A (strain ATCC 9150 / SARB42).